The chain runs to 170 residues: Putative zinc finger protein 542 (170 aa).

The 42-residue stretch at 1–42 folds into the KRAB domain; that stretch reads MLENYQNLVWLGLSISKSVISLLEKRKLPWIMAKEEIRGPLP. 2 C2H2-type zinc fingers span residues 98 to 120 and 126 to 148; these read NVCK…KRNH and NQCL…QRIH. The C2H2-type 3; degenerate zinc-finger motif lies at 154-170; that stretch reads YKCNECIKTFNQRAHLT.

This sequence belongs to the krueppel C2H2-type zinc-finger protein family.

Its subcellular location is the nucleus. May be involved in transcriptional regulation. This is Putative zinc finger protein 542 (ZNF542P) from Homo sapiens (Human).